The chain runs to 393 residues: Methylthioribose kinase (393 aa).

ATP-binding positions include Asn-38, Lys-53, and 107–109 (EDL). Asp-225 is a binding site for substrate. Residue 242–244 (DPE) coordinates ATP. Arg-332 serves as a coordination point for substrate.

This sequence belongs to the methylthioribose kinase family. As to quaternary structure, homodimer.

It carries out the reaction 5-(methylsulfanyl)-D-ribose + ATP = 5-(methylsulfanyl)-alpha-D-ribose 1-phosphate + ADP + H(+). It functions in the pathway amino-acid biosynthesis; L-methionine biosynthesis via salvage pathway; S-methyl-5-thio-alpha-D-ribose 1-phosphate from S-methyl-5'-thioadenosine (hydrolase route): step 2/2. Catalyzes the phosphorylation of methylthioribose into methylthioribose-1-phosphate. This is Methylthioribose kinase from Bacillus cereus (strain ATCC 14579 / DSM 31 / CCUG 7414 / JCM 2152 / NBRC 15305 / NCIMB 9373 / NCTC 2599 / NRRL B-3711).